The sequence spans 172 residues: Urease accessory protein UreE (172 aa).

It belongs to the UreE family.

The protein resides in the cytoplasm. Functionally, involved in urease metallocenter assembly. Binds nickel. Probably functions as a nickel donor during metallocenter assembly. The chain is Urease accessory protein UreE from Shewanella halifaxensis (strain HAW-EB4).